A 174-amino-acid polypeptide reads, in one-letter code: NADH-quinone oxidoreductase subunit B 2 (174 aa).

[4Fe-4S] cluster-binding residues include cysteine 53, cysteine 54, cysteine 118, and cysteine 148.

It belongs to the complex I 20 kDa subunit family. In terms of assembly, NDH-1 is composed of 14 different subunits. Subunits NuoB, C, D, E, F, and G constitute the peripheral sector of the complex. Requires [4Fe-4S] cluster as cofactor.

It is found in the cell inner membrane. It carries out the reaction a quinone + NADH + 5 H(+)(in) = a quinol + NAD(+) + 4 H(+)(out). Functionally, NDH-1 shuttles electrons from NADH, via FMN and iron-sulfur (Fe-S) centers, to quinones in the respiratory chain. Couples the redox reaction to proton translocation (for every two electrons transferred, four hydrogen ions are translocated across the cytoplasmic membrane), and thus conserves the redox energy in a proton gradient. This Cereibacter sphaeroides (strain ATCC 17025 / ATH 2.4.3) (Rhodobacter sphaeroides) protein is NADH-quinone oxidoreductase subunit B 2.